Here is a 354-residue protein sequence, read N- to C-terminus: Dual-specificity RNA methyltransferase RlmN (354 aa).

The Proton acceptor role is filled by E89. Residues 106-339 form the Radical SAM core domain; the sequence is KEAKYTVCVS…CTIRKSKGMD (234 aa). A disulfide bridge links C113 with C344. Residues C120, C124, and C127 each contribute to the [4Fe-4S] cluster site. S-adenosyl-L-methionine contacts are provided by residues 170 to 171, S202, 225 to 227, and N301; these read GE and SLH. The S-methylcysteine intermediate role is filled by C344.

It belongs to the radical SAM superfamily. RlmN family. The cofactor is [4Fe-4S] cluster.

It localises to the cytoplasm. It catalyses the reaction adenosine(2503) in 23S rRNA + 2 reduced [2Fe-2S]-[ferredoxin] + 2 S-adenosyl-L-methionine = 2-methyladenosine(2503) in 23S rRNA + 5'-deoxyadenosine + L-methionine + 2 oxidized [2Fe-2S]-[ferredoxin] + S-adenosyl-L-homocysteine. The catalysed reaction is adenosine(37) in tRNA + 2 reduced [2Fe-2S]-[ferredoxin] + 2 S-adenosyl-L-methionine = 2-methyladenosine(37) in tRNA + 5'-deoxyadenosine + L-methionine + 2 oxidized [2Fe-2S]-[ferredoxin] + S-adenosyl-L-homocysteine. Specifically methylates position 2 of adenine 2503 in 23S rRNA and position 2 of adenine 37 in tRNAs. m2A2503 modification seems to play a crucial role in the proofreading step occurring at the peptidyl transferase center and thus would serve to optimize ribosomal fidelity. This chain is Dual-specificity RNA methyltransferase RlmN, found in Nautilia profundicola (strain ATCC BAA-1463 / DSM 18972 / AmH).